The following is a 446-amino-acid chain: Phosphoglucosamine mutase (446 aa).

The active-site Phosphoserine intermediate is serine 99. Serine 99, aspartate 242, aspartate 244, and aspartate 246 together coordinate Mg(2+). Phosphoserine is present on serine 99.

It belongs to the phosphohexose mutase family. The cofactor is Mg(2+). Activated by phosphorylation.

It carries out the reaction alpha-D-glucosamine 1-phosphate = D-glucosamine 6-phosphate. Its function is as follows. Catalyzes the conversion of glucosamine-6-phosphate to glucosamine-1-phosphate. This is Phosphoglucosamine mutase from Wolinella succinogenes (strain ATCC 29543 / DSM 1740 / CCUG 13145 / JCM 31913 / LMG 7466 / NCTC 11488 / FDC 602W) (Vibrio succinogenes).